The sequence spans 240 residues: Ribonuclease HII (240 aa).

The RNase H type-2 domain maps to 33 to 222; that stretch reads GPVAGVDEVG…VRRIVTRSNT (190 aa). Positions 39, 40, and 131 each coordinate a divalent metal cation.

This sequence belongs to the RNase HII family. Requires Mn(2+) as cofactor. The cofactor is Mg(2+).

The protein resides in the cytoplasm. The catalysed reaction is Endonucleolytic cleavage to 5'-phosphomonoester.. In terms of biological role, endonuclease that specifically degrades the RNA of RNA-DNA hybrids. This chain is Ribonuclease HII, found in Mycobacterium leprae (strain Br4923).